The sequence spans 1432 residues: ABC transporter B family member 3 (1432 aa).

Disordered stretches follow at residues 1 to 21 and 48 to 149; these read MDDG…EEEI and ITQP…KTEE. Low complexity-rich tracts occupy residues 52–62, 76–106, and 118–135; these read SNNNNNSNNNN, NNNN…FNNN, and NTNE…NNND. Residues 117 to 163 adopt a coiled-coil conformation; sequence ENTNENNNKNNNNNNNNNDDYNDGADERVKTEEEIKKEAENELNQSV. In terms of domain architecture, ABC transmembrane type-1 1 spans 180–479; it reads MFLGTIAAVI…ASPCLALFAQ (300 aa). The next 6 membrane-spanning stretches (helical) occupy residues 185 to 205, 232 to 252, 303 to 323, 325 to 345, 410 to 430, and 457 to 477; these read IAAV…GLVV, LLML…LWMI, KVGR…IGFT, GWQL…GGFF, GLGL…AFWY, and FFAV…LALF. Positions 514 to 750 constitute an ABC transporter 1 domain; that stretch reads IEFKDVGFHY…QGLYFDLVEK (237 aa). Residue 549–556 participates in ATP binding; the sequence is GDSGGGKS. Positions 787–819 are disordered; it reads KRSLRKNESESNKKDKEDSNNKKKKKSNKKKVE. The span at 791–807 shows a compositional bias: basic and acidic residues; sequence RKNESESNKKDKEDSNN. Residues 837 to 1157 enclose the ABC transmembrane type-1 2 domain; sequence WCFGFLSAVG…ASSFAPDLAK (321 aa). A run of 6 helical transmembrane segments spans residues 838-858, 882-902, 968-988, 989-1009, 1060-1080, and 1134-1154; these read CFGF…AMVF, LMFV…GFLF, MVGG…VIIA, CFPL…GFSS, ISGF…CLSF, and VFFA…FAPD. The 237-residue stretch at 1192-1428 folds into the ABC transporter 2 domain; that stretch reads IEFKNLHFSY…EGPYSQLWYN (237 aa). 1227 to 1234 lines the ATP pocket; it reads GDSGGGKS.

It belongs to the ABC transporter superfamily. ABCB family. Multidrug resistance exporter (TC 3.A.1.201) subfamily.

The protein resides in the membrane. In Dictyostelium discoideum (Social amoeba), this protein is ABC transporter B family member 3 (abcB3).